Reading from the N-terminus, the 377-residue chain is Homoserine O-acetyltransferase (377 aa).

The region spanning 47–355 (NAILICHALT…DYGHDAFLLE (309 aa)) is the AB hydrolase-1 domain. Serine 153 (nucleophile) is an active-site residue. Arginine 222 serves as a coordination point for substrate. Active-site residues include aspartate 316 and histidine 349. Aspartate 350 contributes to the substrate binding site.

The protein belongs to the AB hydrolase superfamily. MetX family. As to quaternary structure, homodimer.

It localises to the cytoplasm. The catalysed reaction is L-homoserine + acetyl-CoA = O-acetyl-L-homoserine + CoA. Its pathway is amino-acid biosynthesis; L-methionine biosynthesis via de novo pathway; O-acetyl-L-homoserine from L-homoserine: step 1/1. Its function is as follows. Transfers an acetyl group from acetyl-CoA to L-homoserine, forming acetyl-L-homoserine. The sequence is that of Homoserine O-acetyltransferase from Deferribacter desulfuricans (strain DSM 14783 / JCM 11476 / NBRC 101012 / SSM1).